A 260-amino-acid chain; its full sequence is Hydroxyethylthiazole kinase 1 (260 aa).

M39 contacts substrate. R115 and T160 together coordinate ATP. G187 serves as a coordination point for substrate.

This sequence belongs to the Thz kinase family. Requires Mg(2+) as cofactor.

It catalyses the reaction 5-(2-hydroxyethyl)-4-methylthiazole + ATP = 4-methyl-5-(2-phosphooxyethyl)-thiazole + ADP + H(+). The protein operates within cofactor biosynthesis; thiamine diphosphate biosynthesis; 4-methyl-5-(2-phosphoethyl)-thiazole from 5-(2-hydroxyethyl)-4-methylthiazole: step 1/1. Functionally, catalyzes the phosphorylation of the hydroxyl group of 4-methyl-5-beta-hydroxyethylthiazole (THZ). The protein is Hydroxyethylthiazole kinase 1 of Streptococcus pneumoniae (strain ATCC 700669 / Spain 23F-1).